Consider the following 276-residue polypeptide: 4-deoxy-L-threo-5-hexosulose-uronate ketol-isomerase 1 (276 aa).

Positions 194, 196, 201, and 243 each coordinate Zn(2+).

This sequence belongs to the KduI family. Zn(2+) serves as cofactor.

The catalysed reaction is 5-dehydro-4-deoxy-D-glucuronate = 3-deoxy-D-glycero-2,5-hexodiulosonate. Its pathway is glycan metabolism; pectin degradation; 2-dehydro-3-deoxy-D-gluconate from pectin: step 4/5. Functionally, catalyzes the isomerization of 5-dehydro-4-deoxy-D-glucuronate to 3-deoxy-D-glycero-2,5-hexodiulosonate. The chain is 4-deoxy-L-threo-5-hexosulose-uronate ketol-isomerase 1 (kduI1) from Enterococcus faecalis (strain ATCC 700802 / V583).